The primary structure comprises 29 residues: Protein YldA (29 aa).

A helical membrane pass occupies residues Phe5–Leu25.

Its subcellular location is the cell inner membrane. The protein is Protein YldA of Escherichia coli (strain K12).